Consider the following 208-residue polypeptide: Large ribosomal subunit protein bL25 (208 aa).

It belongs to the bacterial ribosomal protein bL25 family. CTC subfamily. As to quaternary structure, part of the 50S ribosomal subunit; part of the 5S rRNA/L5/L18/L25 subcomplex. Contacts the 5S rRNA. Binds to the 5S rRNA independently of L5 and L18.

Functionally, this is one of the proteins that binds to the 5S RNA in the ribosome where it forms part of the central protuberance. This Syntrophotalea carbinolica (strain DSM 2380 / NBRC 103641 / GraBd1) (Pelobacter carbinolicus) protein is Large ribosomal subunit protein bL25.